Consider the following 542-residue polypeptide: Glutamyl-tRNA reductase 2, chloroplastic (542 aa).

Substrate contacts are provided by residues 142–145, Ser202, 207–209, and Gln213; these read TCNR and EGQ. The active-site Nucleophile is the Cys143. 284–289 serves as a coordination point for NADP(+); sequence GAGKMG.

Belongs to the glutamyl-tRNA reductase family. Found in all tissues examined.

The protein localises to the plastid. It localises to the chloroplast. The catalysed reaction is (S)-4-amino-5-oxopentanoate + tRNA(Glu) + NADP(+) = L-glutamyl-tRNA(Glu) + NADPH + H(+). The protein operates within porphyrin-containing compound metabolism; protoporphyrin-IX biosynthesis; 5-aminolevulinate from L-glutamyl-tRNA(Glu): step 1/2. Catalyzes the NADPH-dependent reduction of glutamyl-tRNA(Glu) to glutamate 1-semialdehyde (GSA). This Cucumis sativus (Cucumber) protein is Glutamyl-tRNA reductase 2, chloroplastic (HEMA2).